A 499-amino-acid chain; its full sequence is Maturase K (499 aa).

Belongs to the intron maturase 2 family. MatK subfamily.

It is found in the plastid. The protein resides in the chloroplast. Usually encoded in the trnK tRNA gene intron. Probably assists in splicing its own and other chloroplast group II introns. The polypeptide is Maturase K (Gymnocladus chinensis (Soap tree)).